Here is a 255-residue protein sequence, read N- to C-terminus: Imidazole glycerol phosphate synthase subunit HisF (255 aa).

Active-site residues include D11 and D130.

The protein belongs to the HisA/HisF family. Heterodimer of HisH and HisF.

The protein resides in the cytoplasm. The enzyme catalyses 5-[(5-phospho-1-deoxy-D-ribulos-1-ylimino)methylamino]-1-(5-phospho-beta-D-ribosyl)imidazole-4-carboxamide + L-glutamine = D-erythro-1-(imidazol-4-yl)glycerol 3-phosphate + 5-amino-1-(5-phospho-beta-D-ribosyl)imidazole-4-carboxamide + L-glutamate + H(+). Its pathway is amino-acid biosynthesis; L-histidine biosynthesis; L-histidine from 5-phospho-alpha-D-ribose 1-diphosphate: step 5/9. Its function is as follows. IGPS catalyzes the conversion of PRFAR and glutamine to IGP, AICAR and glutamate. The HisF subunit catalyzes the cyclization activity that produces IGP and AICAR from PRFAR using the ammonia provided by the HisH subunit. This is Imidazole glycerol phosphate synthase subunit HisF from Akkermansia muciniphila (strain ATCC BAA-835 / DSM 22959 / JCM 33894 / BCRC 81048 / CCUG 64013 / CIP 107961 / Muc).